Reading from the N-terminus, the 194-residue chain is Small ribosomal subunit protein uS7 (194 aa).

Belongs to the universal ribosomal protein uS7 family. As to quaternary structure, part of the 30S ribosomal subunit.

In terms of biological role, one of the primary rRNA binding proteins, it binds directly to 16S rRNA where it nucleates assembly of the head domain of the 30S subunit. Is located at the subunit interface close to the decoding center. The polypeptide is Small ribosomal subunit protein uS7 (Sulfurisphaera tokodaii (strain DSM 16993 / JCM 10545 / NBRC 100140 / 7) (Sulfolobus tokodaii)).